A 257-amino-acid polypeptide reads, in one-letter code: Ig delta chain C region secreted form (257 aa).

Residues 5-105 (PDMFLLSECK…WDSQSSKRVT (101 aa)) form the Ig-like 1 domain. A disulfide bridge connects residues Cys-26 and Cys-78. N-linked (GlcNAc...) asparagine glycans are attached at residues Asn-58 and Asn-75. Positions 89 to 111 (PFKFPESWDSQSSKRVTPTLQAK) are disordered. Over residues 96-111 (WDSQSSKRVTPTLQAK) the composition is skewed to polar residues. Residues Asn-112, Asn-135, and Asn-227 are each glycosylated (N-linked (GlcNAc...) asparagine). Residues 133 to 233 (PSNLTVNILT…TKLNASKSLA (101 aa)) enclose the Ig-like 2 domain.

As to expression, cell lines producing IgD contain several mRNA species for Ig delta chains. In plasmacytomas, the secreted form is the major component, and the membrane-bound form is a minor component. In spleen, however, the membrane-bound form is the major component. These two forms differ in their C-terminal segments.

The protein resides in the secreted. The polypeptide is Ig delta chain C region secreted form (Mus musculus (Mouse)).